A 159-amino-acid chain; its full sequence is Cyclic pyranopterin monophosphate synthase (159 aa).

Residues 75-77 (LCH) and 113-114 (ME) each bind substrate. D128 is an active-site residue.

This sequence belongs to the MoaC family. In terms of assembly, homohexamer; trimer of dimers.

The enzyme catalyses (8S)-3',8-cyclo-7,8-dihydroguanosine 5'-triphosphate = cyclic pyranopterin phosphate + diphosphate. The protein operates within cofactor biosynthesis; molybdopterin biosynthesis. Functionally, catalyzes the conversion of (8S)-3',8-cyclo-7,8-dihydroguanosine 5'-triphosphate to cyclic pyranopterin monophosphate (cPMP). In Cereibacter sphaeroides (strain ATCC 17023 / DSM 158 / JCM 6121 / CCUG 31486 / LMG 2827 / NBRC 12203 / NCIMB 8253 / ATH 2.4.1.) (Rhodobacter sphaeroides), this protein is Cyclic pyranopterin monophosphate synthase.